The chain runs to 705 residues: Endoglucanase (705 aa).

The N-terminal stretch at 1–23 is a signal peptide; the sequence is MKILKNCILLIIFGLLSTQLINA. The N-linked (GlcNAc...) asparagine glycan is linked to asparagine 75. Aspartate 85 (nucleophile) is an active-site residue. Active-site residues include histidine 390, aspartate 428, and glutamate 437. The disordered stretch occupies residues 455–556; sequence NPSSTSVPTT…TPTETPSSGE (102 aa). Over residues 462-552 the composition is skewed to low complexity; the sequence is PTTTPTVTET…TPTVTPTETP (91 aa). The tract at residues 463 to 552 is pro/Thr repeats ('hinge') (Pro/Thr box); the sequence is TTTPTVTETP…TPTVTPTETP (90 aa).

Belongs to the glycosyl hydrolase 9 (cellulase E) family.

The catalysed reaction is Endohydrolysis of (1-&gt;4)-beta-D-glucosidic linkages in cellulose, lichenin and cereal beta-D-glucans.. In terms of biological role, may digest the spore cell wall during germination, to release the enclosed amoeba. The chain is Endoglucanase (celA) from Dictyostelium discoideum (Social amoeba).